A 491-amino-acid chain; its full sequence is Cobyric acid synthase (491 aa).

Residues 253-429 (AHRVAVVRLP…WHGSLEGDAL (177 aa)) form the GATase cobBQ-type domain. The active-site Nucleophile is Cys334. His421 is a catalytic residue.

This sequence belongs to the CobB/CobQ family. CobQ subfamily.

It functions in the pathway cofactor biosynthesis; adenosylcobalamin biosynthesis. In terms of biological role, catalyzes amidations at positions B, D, E, and G on adenosylcobyrinic A,C-diamide. NH(2) groups are provided by glutamine, and one molecule of ATP is hydrogenolyzed for each amidation. The protein is Cobyric acid synthase of Mycobacterium marinum (strain ATCC BAA-535 / M).